The chain runs to 58 residues: Large ribosomal subunit protein bL32 (58 aa).

The protein belongs to the bacterial ribosomal protein bL32 family.

In Limosilactobacillus fermentum (strain NBRC 3956 / LMG 18251) (Lactobacillus fermentum), this protein is Large ribosomal subunit protein bL32.